Here is a 551-residue protein sequence, read N- to C-terminus: Glucans biosynthesis protein D (551 aa).

The segment at residues 1–32 is a signal peptide (tat-type signal); sequence MNRRRFIKGSMAMAAVCGSSGIASLFSQAAFA.

The protein belongs to the OpgD/OpgG family. Predicted to be exported by the Tat system. The position of the signal peptide cleavage has not been experimentally proven.

It localises to the periplasm. The protein operates within glycan metabolism; osmoregulated periplasmic glucan (OPG) biosynthesis. In terms of biological role, probably involved in the control of the structural glucose backbone of osmoregulated periplasmic glucans (OPGs). This chain is Glucans biosynthesis protein D, found in Salmonella paratyphi A (strain ATCC 9150 / SARB42).